Consider the following 209-residue polypeptide: Large ribosomal subunit protein bL21m (209 aa).

A mitochondrion-targeting transit peptide spans M1–F43.

This sequence belongs to the bacterial ribosomal protein bL21 family. In terms of assembly, component of the mitochondrial ribosome large subunit (39S) which comprises a 16S rRNA and about 50 distinct proteins.

The protein resides in the mitochondrion. The protein is Large ribosomal subunit protein bL21m (Mrpl21) of Mus musculus (Mouse).